Consider the following 333-residue polypeptide: Photosystem II assembly lipoprotein Ycf48 (333 aa).

The N-terminal stretch at Met1–Gly23 is a signal peptide. Cys24 carries the N-palmitoyl cysteine lipid modification. A lipid anchor (S-diacylglycerol cysteine) is attached at Cys24.

This sequence belongs to the Ycf48 family. In terms of assembly, part of early PSII assembly complexes which includes D1 (psbA) and PsbI; not found in mature PSII. Binds to the lumenal side of PSII complexes. Interacts with YidC.

The protein localises to the cellular thylakoid membrane. Functionally, a factor required for optimal assembly of photosystem II (PSII), acting in the early stages of PSII assembly. Also plays a role in replacement of photodamaged D1 (psbA). Assists YidC in synthesis of chlorophyll-binding proteins. This is Photosystem II assembly lipoprotein Ycf48 from Synechococcus sp. (strain CC9902).